The following is a 542-amino-acid chain: Aminotriazole resistance protein (542 aa).

Residues 1–108 (MGNQSLVVLT…SFGSEGNSKS (108 aa)) lie on the Cytoplasmic side of the membrane. Residues 109–129 (WLMASFPLVSGSFILISGRLG) traverse the membrane as a helical segment. Residues 130–136 (DIYGLKK) are Extracellular-facing. A helical membrane pass occupies residues 137–157 (MLLVGYVLVIIWSLICGITKY). The Cytoplasmic portion of the chain corresponds to 158–172 (SGSDTFFIISRAFQG). Residues 173–193 (LGIAFVLPNVLGIIGNIYVGG) form a helical membrane-spanning segment. Topologically, residues 194–198 (TFRKN) are extracellular. A helical transmembrane segment spans residues 199-219 (IVISFVGAMAPIGATLGCLFA). Topologically, residues 220-231 (GLIGTEDPKQWP) are cytoplasmic. Residues 232 to 252 (WAFYAYSIAAFINFVLSIYAI) traverse the membrane as a helical segment. Residues 253–262 (PSTIPTNIHH) are Extracellular-facing. The helical transmembrane segment at 263 to 283 (FSMDWIGSVLGVIGLILLNFV) threads the bilayer. Residues 284–295 (WNQAPISGWNQA) lie on the Cytoplasmic side of the membrane. Residues 296–316 (YIIVILIISVIFLVVFIIYEI) form a helical membrane-spanning segment. Residues 317 to 333 (RFAKTPLLPRAVIKDRH) are Extracellular-facing. Residues 334–354 (MIQIMLALFFGWGSFGIFTFY) traverse the membrane as a helical segment. At 355–371 (YFQFQLNIRQYTALWAG) the chain is on the cytoplasmic side. Residues 372 to 392 (GTYFMFLIWGIIAALLVGFTI) form a helical membrane-spanning segment. Topologically, residues 393–399 (KNVSPSV) are extracellular. The helical transmembrane segment at 400-420 (FLFFSMVAFNVGSIMASVTPV) threads the bilayer. Residues 421 to 429 (HETYFRTQL) are Cytoplasmic-facing. A helical transmembrane segment spans residues 430–450 (GTMIILSFGMDLSFPASSIIF). At 451-505 (SDNLPMEYQGMAGSLVNTVVNYSMSLCLGMGATVETQVNSDGKHLLKGYRGAQYL) the chain is on the extracellular side. Residue N471 is glycosylated (N-linked (GlcNAc...) asparagine). The chain crosses the membrane as a helical span at residues 506 to 526 (GIGLASLACMISGLYMVESFI). Over 527–542 (KGRRARAAAEYDCTVA) the chain is Cytoplasmic.

It belongs to the major facilitator superfamily.

The protein resides in the membrane. In terms of biological role, putative component of the machinery responsible for pumping aminotriazole (and possibly other toxic compounds) out of the cell. Probable ATP-dependent export permease. Appears to confer resistance only to aminotriazole. The sequence is that of Aminotriazole resistance protein (ATR1) from Saccharomyces cerevisiae (strain ATCC 204508 / S288c) (Baker's yeast).